Reading from the N-terminus, the 337-residue chain is uncharacterized protein (337 aa).

2 helical membrane passes run 4–24 and 26–46; these read FIFFFKNYCYISGSMLLFSLI and LLLWIISLYCVGLVFWILFVL.

It belongs to the plectrovirus ORF2 family.

Its subcellular location is the host membrane. This is an uncharacterized protein from Spiroplasma virus SpV1-R8A2 B (SpV1).